The primary structure comprises 412 residues: NADH-ubiquinone oxidoreductase 49 kDa subunit (412 aa).

Belongs to the complex I 49 kDa subunit family.

It is found in the hydrogenosome. The enzyme catalyses a ubiquinone + NADH + 5 H(+)(in) = a ubiquinol + NAD(+) + 4 H(+)(out). In terms of biological role, transfer of electrons from NADH to the respiratory chain. The immediate electron acceptor for the enzyme is believed to be ubiquinone. Component of the iron-sulfur (IP) fragment of the enzyme. In Nyctotherus ovalis, this protein is NADH-ubiquinone oxidoreductase 49 kDa subunit (nad7).